Consider the following 216-residue polypeptide: Alanyl-tRNA editing protein AlaX-M (216 aa).

Positions 99, 103, and 182 each coordinate Zn(2+).

Belongs to the class-II aminoacyl-tRNA synthetase family. Editing domain AlaX-M subfamily. In terms of assembly, monomer. The cofactor is Zn(2+).

It is found in the cytoplasm. Functionally, functions in trans to edit the amino acid moiety from mischarged charged Gly-tRNA(Ala) and Ser-tRNA(Ala). The chain is Alanyl-tRNA editing protein AlaX-M (alaXM) from Pyrococcus horikoshii (strain ATCC 700860 / DSM 12428 / JCM 9974 / NBRC 100139 / OT-3).